The following is a 542-amino-acid chain: MEIDLMKHIQKTKFIFVTGGVYSSLGKGVSASSIGRILVELGYSVAMQKLDPYLNIDPTYLSPLQHGEVFVTKDGKEADLDLGTYERFINADLNKYASVTSGKIYYEILTKERENGFDGKTVQTIPHVTSAVIDYIKKIKDSLKTDFIIVEIGGTIGDIESLPFIEAISQFKTIYGVNNVMFIHCSPLIYIEKVGELKTKPTQHSVKTLRSLGINLDLLLLRTNQKLDEVTIKKLAWSCGLDIDMIFAAYDVESVYLLPNVLFEQGIHKTILDFFSLPLKNDNINSWIDFTDKITTFKKHNLVIGLVGKYVELPDAYKSVLASLELAAIELNIDLKIKYIQPQNLNENNINEELKKINGIVIPSIAGSIKGWPGALLAASYARKNNIPFLAVGTGVNIGIGEFINNVLKLPIEFINLGNGDFSFLKDAFVKNEIENYRIGEYCSNIQANTITSQIYLKQNQLNERHRHHFEFNNHYINNYFLNQNWKIGAISVDNNYIDVLEYTKNHFYVLTIFNPEYTSKPSKANPYFINLLKMSLKIKES.

The tract at residues 1–277 (MEIDLMKHIQ…HKTILDFFSL (277 aa)) is amidoligase domain. Position 23 (Ser23) interacts with CTP. Ser23 contacts UTP. ATP is bound by residues 24–29 (SLGKGV) and Asp81. Mg(2+) contacts are provided by Asp81 and Glu151. Residues 158-160 (DIE), 198-203 (KTKPTQ), and Lys234 each bind CTP. Residues 198–203 (KTKPTQ) and Lys234 contribute to the UTP site. In terms of domain architecture, Glutamine amidotransferase type-1 spans 310–542 (YVELPDAYKS…LKMSLKIKES (233 aa)). The active site involves Glu517.

Belongs to the CTP synthase family. In terms of assembly, homotetramer.

The enzyme catalyses UTP + L-glutamine + ATP + H2O = CTP + L-glutamate + ADP + phosphate + 2 H(+). It carries out the reaction L-glutamine + H2O = L-glutamate + NH4(+). It catalyses the reaction UTP + NH4(+) + ATP = CTP + ADP + phosphate + 2 H(+). It functions in the pathway pyrimidine metabolism; CTP biosynthesis via de novo pathway; CTP from UDP: step 2/2. Allosterically activated by GTP, when glutamine is the substrate; GTP has no effect on the reaction when ammonia is the substrate. The allosteric effector GTP functions by stabilizing the protein conformation that binds the tetrahedral intermediate(s) formed during glutamine hydrolysis. Inhibited by the product CTP, via allosteric rather than competitive inhibition. In terms of biological role, catalyzes the ATP-dependent amination of UTP to CTP with either L-glutamine or ammonia as the source of nitrogen. Regulates intracellular CTP levels through interactions with the four ribonucleotide triphosphates. The polypeptide is Putative CTP synthase (Ureaplasma parvum serovar 3 (strain ATCC 700970)).